Consider the following 474-residue polypeptide: Aspartic-type endopeptidase ctsD (474 aa).

The first 19 residues, 1-19, serve as a signal peptide directing secretion; sequence MHLLQCLLSTISLASTVTA. Positions 106–413 constitute a Peptidase A1 domain; it reads YFATVRVGSQ…DYDNHRIGFA (308 aa). Asp124 is a catalytic residue. N-linked (GlcNAc...) asparagine glycans are attached at residues Asn189, Asn197, Asn275, and Asn301. Asp307 is a catalytic residue. 3 N-linked (GlcNAc...) asparagine glycosylation sites follow: Asn338, Asn344, and Asn414. The GPI-anchor amidated serine moiety is linked to residue Ser452. Residues 453 to 474 constitute a propeptide, removed in mature form; it reads ASIVSRFVHWPFIFALLCMVLV.

It belongs to the peptidase A1 family.

Its subcellular location is the cell membrane. Functionally, secreted aspartic-type endopeptidase which is secreted and contributes to virulence. In Aspergillus fumigatus (strain ATCC MYA-4609 / CBS 101355 / FGSC A1100 / Af293) (Neosartorya fumigata), this protein is Aspartic-type endopeptidase ctsD (ctsD).